The chain runs to 176 residues: NAD(P)H-quinone oxidoreductase subunit J (176 aa).

The protein belongs to the complex I 30 kDa subunit family. In terms of assembly, NDH-1 can be composed of about 15 different subunits; different subcomplexes with different compositions have been identified which probably have different functions.

The protein resides in the cell inner membrane. It carries out the reaction a plastoquinone + NADH + (n+1) H(+)(in) = a plastoquinol + NAD(+) + n H(+)(out). The catalysed reaction is a plastoquinone + NADPH + (n+1) H(+)(in) = a plastoquinol + NADP(+) + n H(+)(out). Functionally, NDH-1 shuttles electrons from an unknown electron donor, via FMN and iron-sulfur (Fe-S) centers, to quinones in the respiratory and/or the photosynthetic chain. The immediate electron acceptor for the enzyme in this species is believed to be plastoquinone. Couples the redox reaction to proton translocation, and thus conserves the redox energy in a proton gradient. Cyanobacterial NDH-1 also plays a role in inorganic carbon-concentration. This is NAD(P)H-quinone oxidoreductase subunit J from Gloeobacter violaceus (strain ATCC 29082 / PCC 7421).